A 354-amino-acid polypeptide reads, in one-letter code: Probable L-ascorbate-6-phosphate lactonase UlaG (354 aa).

The protein belongs to the UlaG family. Requires a divalent metal cation as cofactor.

It localises to the cytoplasm. The enzyme catalyses L-ascorbate 6-phosphate + H2O = 3-dehydro-L-gulonate 6-phosphate. It participates in cofactor degradation; L-ascorbate degradation; D-xylulose 5-phosphate from L-ascorbate: step 1/4. Functionally, probably catalyzes the hydrolysis of L-ascorbate-6-P into 3-keto-L-gulonate-6-P. Is essential for L-ascorbate utilization under anaerobic conditions. This chain is Probable L-ascorbate-6-phosphate lactonase UlaG, found in Shigella boydii serotype 4 (strain Sb227).